A 70-amino-acid polypeptide reads, in one-letter code: Small ribosomal subunit protein bS21 (70 aa).

It belongs to the bacterial ribosomal protein bS21 family.

The protein is Small ribosomal subunit protein bS21 of Nitratidesulfovibrio vulgaris (strain ATCC 29579 / DSM 644 / CCUG 34227 / NCIMB 8303 / VKM B-1760 / Hildenborough) (Desulfovibrio vulgaris).